A 134-amino-acid polypeptide reads, in one-letter code: Cytochrome c-type biogenesis protein CcmE (134 aa).

Residues 1 to 7 lie on the Cytoplasmic side of the membrane; it reads MKRKYRR. A helical; Signal-anchor for type II membrane protein transmembrane segment spans residues 8–28; sequence LFVVIITLSIFAGSVVFVLGK. At 29–134 the chain is on the periplasmic side; it reads LKNNVSFFYT…MPNKYKTNNL (106 aa). The heme site is built by His-120 and Tyr-124.

The protein belongs to the CcmE/CycJ family.

The protein resides in the cell inner membrane. Heme chaperone required for the biogenesis of c-type cytochromes. Transiently binds heme delivered by CcmC and transfers the heme to apo-cytochromes in a process facilitated by CcmF and CcmH. The protein is Cytochrome c-type biogenesis protein CcmE of Ehrlichia ruminantium (strain Gardel).